A 1648-amino-acid polypeptide reads, in one-letter code: Cortactin-binding protein 2 (1648 aa).

5 disordered regions span residues 1–26 (MATD…TAEA), 200–250 (EEKK…EEAH), 322–439 (PLTV…PGLN), 451–476 (GNAN…PTSR), and 492–608 (ALSR…PSID). The stretch at 119–274 (KMQERMSAQL…MEQMKKGSDG (156 aa)) forms a coiled coil. 2 stretches are compositionally biased toward basic and acidic residues: residues 200 to 218 (EEKK…EKQR) and 225 to 250 (QLEK…EEAH). Composition is skewed to polar residues over residues 330 to 342 (STGS…NTKG) and 372 to 392 (LPSS…APDL). Residues 393 to 415 (SNSTPSTPSSTAPAAAQTPGTAP) are compositionally biased toward low complexity. Polar residues predominate over residues 492-503 (ALSRFTSPQAGA). Arg-495 bears the Asymmetric dimethylarginine mark. ANK repeat units follow at residues 699–729 (GRPT…DINY), 733–762 (DGHS…RVDA), 766–795 (NGFT…NINH), 799–828 (GGQT…DRSI), 832–861 (DGWT…RAHG), and 901–931 (EGWT…EPER). Positions 1438-1492 (SGAWRKVNTSPRKKPGHFSSPTWNKPDPKREGMRNKTIPHLNTNRNSSLSKQQSL) are disordered. Residues 1477–1492 (HLNTNRNSSLSKQQSL) are compositionally biased toward polar residues. Ser-1510 bears the Phosphoserine mark. Positions 1522–1648 (SMCSSKSESD…KHEQVEKPNK (127 aa)) are disordered. Basic and acidic residues predominate over residues 1528 to 1547 (SESDISKIADSRDDLRKFDS). 2 stretches are compositionally biased toward polar residues: residues 1548–1557 (SRTNPGTSAP) and 1571–1584 (PPSS…SNSK). Over residues 1609–1623 (SQNTKRNSSSSNTRQ) the composition is skewed to low complexity. The span at 1630–1648 (SKEENWTLDKHEQVEKPNK) shows a compositional bias: basic and acidic residues.

Interacts with CTTN/cortactin SH3 domain. Interacts with STRN, STRN4/zinedin and MOB4/phocein; this interactions mediate the association with the STRIPAK core complex and may regulate dendritic spine distribution of the STRIPAK complex in hippocampal neurons. Activation of glutamate receptors weakens the interaction with STRN and STRN4. In terms of tissue distribution, isoform 2 is predominantly expressed in brain (at protein level). In the brain, expressed at high levels in hypothalamus and striatum and at lower levels in cerebellum and cortex.

The protein resides in the cytoplasm. It localises to the cell cortex. Its subcellular location is the cell projection. The protein localises to the dendritic spine. Regulates the dendritic spine distribution of CTTN/cortactin in hippocampal neurons, and thus controls dendritic spinogenesis and dendritic spine maintenance. Associates with the striatin-interacting phosphatase and kinase (STRIPAK) core complex to regulate dendritic spine distribution of the STRIPAK complex in hippocampal neurons. This Mus musculus (Mouse) protein is Cortactin-binding protein 2 (Cttnbp2).